The sequence spans 86 residues: MLSNSTSRNRHSKHNKKNTREDFDGYYFNKNVVICDDKGQKITAKVYKTSKYWLMLKTSDGKTIFMNKAFIKSIELAEEEEKDDLA.

The disordered stretch occupies residues 1 to 21; it reads MLSNSTSRNRHSKHNKKNTRE. Positions 8 to 17 are enriched in basic residues; sequence RNRHSKHNKK.

This is an uncharacterized protein from Acidianus convivator (ATV).